The sequence spans 154 residues: Endoribonuclease YbeY (154 aa).

Residues H113, H117, and H123 each coordinate Zn(2+).

It belongs to the endoribonuclease YbeY family. Zn(2+) is required as a cofactor.

The protein localises to the cytoplasm. Its function is as follows. Single strand-specific metallo-endoribonuclease involved in late-stage 70S ribosome quality control and in maturation of the 3' terminus of the 16S rRNA. The protein is Endoribonuclease YbeY of Vibrio cholerae serotype O1 (strain ATCC 39315 / El Tor Inaba N16961).